A 913-amino-acid polypeptide reads, in one-letter code: DNA repair endonuclease XPF (913 aa).

The helicase-like stretch occupies residues 1 to 454 (MDRGISAVRK…EVWVNLRKGD (454 aa)). Leucine-zipper stretches follow at residues 233-254 (LNAC…DLSL) and 270-298 (LDPL…LQYL). K289 carries the post-translational modification N6-acetyllysine. Over residues 453-476 (GDGPKRTMKSDKRPKDTKNKERAS) the composition is skewed to basic and acidic residues. Disordered stretches follow at residues 453–525 (GDGP…CGGE) and 638–677 (VVPE…HNGT). The Nuclear localization signal signature appears at 483–488 (KRKKRE). Residues 500 to 509 (EPPEEGAAEE) are compositionally biased toward acidic residues. At S518 the chain carries Phosphoserine. Over residues 638–649 (VVPEEREGRDET) the composition is skewed to basic and acidic residues. Positions 655–810 (RGTVSTDAPA…PSPHATAELF (156 aa)) are nuclease. Residues 680-760 (SIVVDMREFR…RPVLLIEFDA (81 aa)) form the ERCC4 domain. Residues 834-902 (TLPESDKYNP…QLYDFLHTAY (69 aa)) are hhH2, dimerization with ERCC1.

Belongs to the XPF family. Heterodimer composed of ERCC1 and ERCC4/XPF. Interacts with SLX4/BTBD12; this interaction is direct and links the ERCC1-ERCC4/XPF complex to SLX4, which may coordinate the action of the structure-specific endonuclease during DNA repair. Mg(2+) serves as cofactor.

The protein resides in the nucleus. It localises to the chromosome. In terms of biological role, catalytic component of a structure-specific DNA repair endonuclease responsible for the 5-prime incision during DNA repair, and which is essential for nucleotide excision repair (NER) and interstrand cross-link (ICL) repair. The sequence is that of DNA repair endonuclease XPF from Cricetulus griseus (Chinese hamster).